The chain runs to 196 residues: ATP-dependent Clp protease proteolytic subunit (196 aa).

Catalysis depends on Ser-96, which acts as the Nucleophile. His-121 is an active-site residue.

It belongs to the peptidase S14 family. As to quaternary structure, fourteen ClpP subunits assemble into 2 heptameric rings which stack back to back to give a disk-like structure with a central cavity, resembling the structure of eukaryotic proteasomes.

The protein resides in the cytoplasm. It carries out the reaction Hydrolysis of proteins to small peptides in the presence of ATP and magnesium. alpha-casein is the usual test substrate. In the absence of ATP, only oligopeptides shorter than five residues are hydrolyzed (such as succinyl-Leu-Tyr-|-NHMec, and Leu-Tyr-Leu-|-Tyr-Trp, in which cleavage of the -Tyr-|-Leu- and -Tyr-|-Trp bonds also occurs).. In terms of biological role, cleaves peptides in various proteins in a process that requires ATP hydrolysis. Has a chymotrypsin-like activity. Plays a major role in the degradation of misfolded proteins. The chain is ATP-dependent Clp protease proteolytic subunit from Streptococcus salivarius.